The following is an 89-amino-acid chain: Small ribosomal subunit protein uS17 (89 aa).

Belongs to the universal ribosomal protein uS17 family. As to quaternary structure, part of the 30S ribosomal subunit.

In terms of biological role, one of the primary rRNA binding proteins, it binds specifically to the 5'-end of 16S ribosomal RNA. This chain is Small ribosomal subunit protein uS17, found in Xanthomonas axonopodis pv. citri (strain 306).